The primary structure comprises 393 residues: Argininosuccinate synthase (393 aa).

Residues 10–18 (AYSGGLDTS) and Ala37 contribute to the ATP site. An L-citrulline-binding site is contributed by Tyr88. An ATP-binding site is contributed by Gly118. L-aspartate-binding residues include Thr120, Asn124, and Asp125. Asn124 contributes to the L-citrulline binding site. Arg128, Ser176, Ser185, Glu261, and Tyr273 together coordinate L-citrulline.

Belongs to the argininosuccinate synthase family. Type 1 subfamily. As to quaternary structure, homotetramer.

It localises to the cytoplasm. The enzyme catalyses L-citrulline + L-aspartate + ATP = 2-(N(omega)-L-arginino)succinate + AMP + diphosphate + H(+). It functions in the pathway amino-acid biosynthesis; L-arginine biosynthesis; L-arginine from L-ornithine and carbamoyl phosphate: step 2/3. The polypeptide is Argininosuccinate synthase (Carsonella ruddii (strain PV)).